A 488-amino-acid polypeptide reads, in one-letter code: Glutamyl-tRNA(Gln) amidotransferase subunit A (488 aa).

Residues K80 and S155 each act as charge relay system in the active site. S179 functions as the Acyl-ester intermediate in the catalytic mechanism.

The protein belongs to the amidase family. GatA subfamily. In terms of assembly, heterotrimer of A, B and C subunits.

The enzyme catalyses L-glutamyl-tRNA(Gln) + L-glutamine + ATP + H2O = L-glutaminyl-tRNA(Gln) + L-glutamate + ADP + phosphate + H(+). Its function is as follows. Allows the formation of correctly charged Gln-tRNA(Gln) through the transamidation of misacylated Glu-tRNA(Gln) in organisms which lack glutaminyl-tRNA synthetase. The reaction takes place in the presence of glutamine and ATP through an activated gamma-phospho-Glu-tRNA(Gln). The chain is Glutamyl-tRNA(Gln) amidotransferase subunit A from Chloroflexus aggregans (strain MD-66 / DSM 9485).